Consider the following 199-residue polypeptide: Recombination protein RecR (199 aa).

The C4-type zinc finger occupies 58-73 (CSVCFTLSDTPVCAIC). The Toprim domain occupies 81 to 176 (SLLCVVEGPT…TVTRIASGMP (96 aa)).

Belongs to the RecR family.

In terms of biological role, may play a role in DNA repair. It seems to be involved in an RecBC-independent recombinational process of DNA repair. It may act with RecF and RecO. This is Recombination protein RecR from Desulfosudis oleivorans (strain DSM 6200 / JCM 39069 / Hxd3) (Desulfococcus oleovorans).